A 445-amino-acid polypeptide reads, in one-letter code: Methylenetetrahydrofolate--tRNA-(uracil-5-)-methyltransferase TrmFO (445 aa).

Gly-10–Gly-15 is an FAD binding site.

The protein belongs to the MnmG family. TrmFO subfamily. FAD serves as cofactor.

Its subcellular location is the cytoplasm. The enzyme catalyses uridine(54) in tRNA + (6R)-5,10-methylene-5,6,7,8-tetrahydrofolate + NADH + H(+) = 5-methyluridine(54) in tRNA + (6S)-5,6,7,8-tetrahydrofolate + NAD(+). It carries out the reaction uridine(54) in tRNA + (6R)-5,10-methylene-5,6,7,8-tetrahydrofolate + NADPH + H(+) = 5-methyluridine(54) in tRNA + (6S)-5,6,7,8-tetrahydrofolate + NADP(+). Catalyzes the folate-dependent formation of 5-methyl-uridine at position 54 (M-5-U54) in all tRNAs. This is Methylenetetrahydrofolate--tRNA-(uracil-5-)-methyltransferase TrmFO from Microcystis aeruginosa (strain NIES-843 / IAM M-2473).